The primary structure comprises 456 residues: Smoothelin-like protein 2 (456 aa).

The stretch at 24–88 (LEGAVRALHE…RQVEALGLAT (65 aa)) forms a coiled coil. Residue T96 is modified to Phosphothreonine. Phosphoserine is present on residues S98, S126, and S131. A compositionally biased stretch (polar residues) spans 120 to 129 (HATFSLSGRS). Disordered regions lie at residues 120 to 140 (HATFSLSGRSPSVEHDEASDL), 154 to 190 (GHQLDAGPANGSSEVQTSSAQEPPRPRPVSLSLRMPH), and 220 to 310 (VGGF…GAQA). Over residues 131–140 (SVEHDEASDL) the composition is skewed to basic and acidic residues. Over residues 163 to 174 (NGSSEVQTSSAQ) the composition is skewed to polar residues. A compositionally biased stretch (low complexity) spans 242–251 (SSSFTRSLSG). S250, S252, and S265 each carry phosphoserine. A compositionally biased stretch (pro residues) spans 268–279 (LVTPPQSPPSSQ). T270 is modified (phosphothreonine). S274 bears the Phosphoserine mark. The span at 298 to 308 (RSQTLPRTSGA) shows a compositional bias: polar residues. The residue at position 339 (S339) is a Phosphoserine. Positions 346–453 (SSIKQILLEW…YVQSLYNHLR (108 aa)) constitute a Calponin-homology (CH) domain.

This sequence belongs to the smoothelin family.

In Mus musculus (Mouse), this protein is Smoothelin-like protein 2 (Smtnl2).